The following is a 185-amino-acid chain: Ribosome-recycling factor (185 aa).

Belongs to the RRF family.

The protein localises to the cytoplasm. Its function is as follows. Responsible for the release of ribosomes from messenger RNA at the termination of protein biosynthesis. May increase the efficiency of translation by recycling ribosomes from one round of translation to another. This chain is Ribosome-recycling factor, found in Streptococcus equi subsp. equi (strain 4047).